The primary structure comprises 338 residues: 1-aminocyclopropane-1-carboxylate deaminase (338 aa).

An N6-(pyridoxal phosphate)lysine modification is found at lysine 51. Residue serine 78 is the Nucleophile of the active site.

This sequence belongs to the ACC deaminase/D-cysteine desulfhydrase family. In terms of assembly, homotrimer. It depends on pyridoxal 5'-phosphate as a cofactor.

The enzyme catalyses 1-aminocyclopropane-1-carboxylate + H2O = 2-oxobutanoate + NH4(+). Catalyzes a cyclopropane ring-opening reaction, the irreversible conversion of 1-aminocyclopropane-1-carboxylate (ACC) to ammonia and alpha-ketobutyrate. Allows growth on ACC as a nitrogen source. This chain is 1-aminocyclopropane-1-carboxylate deaminase, found in Burkholderia cenocepacia (strain ATCC BAA-245 / DSM 16553 / LMG 16656 / NCTC 13227 / J2315 / CF5610) (Burkholderia cepacia (strain J2315)).